The primary structure comprises 898 residues: MAAAAAEEGMEPRALQYEQTLMYGRYTQDLGAFAKEEAARIRLGGPEPWKGPPSSRAAPELLEYGRSRCARCRVCSVRCHKFLVSRVGEDWIFLVLLGLLMALVSWVMDYAIAACLQAQQWMSRGLNTSILLQYLAWVTYPVVLITFSAGFTQILAPQAVGSGIPEMKTILRGVVLKEYLTLKTFIAKVIGLTCALGSGMPLGKEGPFVHIASMCAALLSKFLSLFGGIYENESRNTEMLAAACAVGVGCCFAAPIGGVLFSIEVTSTFFAVRNYWRGFFAATFSAFIFRVLAVWNRDEETITALFKTRFRLDFPFDLQELPAFAVIGIASGFGGALFVYLNRKIVQVMRKQKTINRFLMRKRLLFPALVTLLISTLTFPPGFGQFMAGQLSQKETLVTLFDNRTWVRQGLVEELEPPSTSQAWNPPRANVFLTLVIFILMKFWMSALATTIPVPCGAFMPVFVIGAAFGRLVGESMAAWFPDGIHTDSSTYRIVPGGYAVVGAAALAGAVTHTVSTAVIVFELTGQIAHILPVMIAVILANAVAQSLQPSLYDSIIRIKKLPYLPELGWGRHQQYRVRVEDIMVRDVPHVALSCTFRDLRLALHRTKGRMLALVESPESMILLGSIERSQVVALLGAQLSPARRRQHMQERRATQTSPLSDQEGPPTPEASVCFQVNTEDSAFPAARGETHKPLKPALKRGPSVTRNLGESPTGSAESAGIALRSLFCGSPPPEAASEKLESCEKRKLKRVRISLASDADLEGEMSPEEILEWEEQQLDEPVNFSDCKIDPAPFQLVERTSLHKTHTIFSLLGVDHAYVTSIGRLIGIVTLKELRKAIEGSVTAQGVKVRPPLASFRDSATSSSDTETTEVHALWGPHSRHGLPREGSPSDSDDKCQ.

An N-acetylalanine modification is found at alanine 2. The Cytoplasmic portion of the chain corresponds to 2 to 87 (AAAAAEEGME…RCHKFLVSRV (86 aa)). The tract at residues 16–34 (QYEQTLMYGRYTQDLGAFA) is essential for channel gating by both voltage and cell volume. Threonine 20 carries the phosphothreonine modification. Residues 36–49 (EEAARIRLGGPEPW) are modulates channel gating by both voltage and cell volume. 2 helical membrane-spanning segments follow: residues 88 to 121 (GEDWIFLVLLGLLMALVSWVMDYAIAACLQAQQW) and 130 to 155 (ILLQYLAWVTYPVVLITFSAGFTQIL). The short motif at 161–165 (GSGIP) is the Selectivity filter part_1 element. Serine 162 serves as a coordination point for chloride. The helical intramembrane region spans 164-171 (IPEMKTIL). 2 helical membrane-spanning segments follow: residues 180–198 (LTLKTFIAKVIGLTCALGS) and 205–223 (EGPFVHIASMCAALLSKFL). Positions 203–207 (GKEGP) match the Selectivity filter part_2 motif. Intramembrane regions (helical) lie at residues 239-251 (MLAAACAVGVGCC) and 255-263 (PIGGVLFSI). Helical transmembrane passes span 275-295 (YWRGFFAATFSAFIFRVLAVW), 321-349 (LPAFAVIGIASGFGGALFVYLNRKIVQVM), 358-377 (FLMRKRLLFPALVTLLISTL), 429-449 (ANVFLTLVIFILMKFWMSALA), and 457-480 (GAFMPVFVIGAAFGRLVGESMAAW). Residues 457 to 461 (GAFMP) carry the Selectivity filter part_3 motif. Residue phenylalanine 459 participates in chloride binding. The segment at residues 497–511 (GGYAVVGAAALAGAV) is an intramembrane region (helical). Positions 512–513 (TH) form an intramembrane region, note=Loop between two helices. The segment at residues 514–525 (TVSTAVIVFELT) is an intramembrane region (helical). The segment at residues 526-530 (GQIAH) is an intramembrane region (note=Loop between two helices). Residues 531-548 (ILPVMIAVILANAVAQSL) form a helical membrane-spanning segment. Residues 549–898 (QPSLYDSIIR…SPSDSDDKCQ (350 aa)) lie on the Cytoplasmic side of the membrane. Tyrosine 553 contacts chloride. In terms of domain architecture, CBS 1 spans 584-642 (MVRDVPHVALSCTFRDLRLALHRTKGRMLALVESPESMILLGSIERSQVVALLGAQLSP). Disordered stretches follow at residues 643 to 672 (ARRRQHMQERRATQTSPLSDQEGPPTPEAS) and 686 to 717 (AARGETHKPLKPALKRGPSVTRNLGESPTGSA). A compositionally biased stretch (polar residues) spans 705-717 (VTRNLGESPTGSA). A phosphoserine mark is found at serine 712 and serine 758. The region spanning 790-850 (IDPAPFQLVE…GSVTAQGVKV (61 aa)) is the CBS 2 domain. Positions 812–813 (LL) match the Basolateral membrane sorting motif. The tract at residues 856–898 (SFRDSATSSSDTETTEVHALWGPHSRHGLPREGSPSDSDDKCQ) is disordered.

The protein belongs to the chloride channel (TC 2.A.49) family. ClC-2/CLCN2 subfamily. As to quaternary structure, homodimer. Interacts with auxiliary subunit HEPACAM. In terms of processing, phosphorylated. Activated by dephosphorylation. In terms of tissue distribution, ubiquitously expressed. Moderately expressed in aortic and coronary vascular smooth muscle cells and expressed at a low level in aortic endothelial cells. Expressed in the adrenal gland, predominantly in the zona glomerulosa. Expressed in white mater perivascular astrocytes and ependymal cells (at protein level).

It is found in the cell membrane. The protein localises to the basolateral cell membrane. The protein resides in the cell projection. It localises to the dendritic spine membrane. Its subcellular location is the axon. It catalyses the reaction chloride(in) = chloride(out). The enzyme catalyses thiocyanate(in) = thiocyanate(out). It carries out the reaction bromide(in) = bromide(out). The catalysed reaction is nitrate(in) = nitrate(out). It catalyses the reaction iodide(out) = iodide(in). Common gate kinetics are down-regulated by intracellular ATP. Inhibited by AK-42, a derivative of meclofenamate. Inhibited by Cd(2+). Inhibited by Zn(2+) and PKC activation. Inhibited at acidic pH. CCLN2:HEPACAM channel conductance is up-regulated upon hypo-osmolarity. In terms of biological role, voltage-gated and osmosensitive chloride channel. Forms a homodimeric channel where each subunit has its own ion conduction pathway. Conducts double-barreled currents controlled by two types of gates, two fast glutamate gates that control each subunit independently and a slow common gate that opens and shuts off both subunits simultaneously. Displays inward rectification currents activated upon membrane hyperpolarization and extracellular hypotonicity. Contributes to chloride conductance involved in neuron excitability. In hippocampal neurons, generates a significant part of resting membrane conductance and provides an additional chloride efflux pathway to prevent chloride accumulation in dendrites upon GABA receptor activation. In glia, associates with the auxiliary subunit HEPACAM/GlialCAM at astrocytic processes and myelinated fiber tracts where it may regulate transcellular chloride flux buffering extracellular chloride and potassium concentrations. Regulates aldosterone production in adrenal glands. The opening of CLCN2 channels at hyperpolarized membrane potentials in the glomerulosa causes cell membrane depolarization, activation of voltage-gated calcium channels and increased expression of aldosterone synthase, the rate-limiting enzyme for aldosterone biosynthesis. Contributes to chloride conductance in retinal pigment epithelium involved in phagocytosis of shed photoreceptor outer segments and photoreceptor renewal. Conducts chloride currents at the basolateral membrane of epithelial cells with a role in chloride reabsorption rather than secretion. Permeable to small monovalent anions with chloride &gt; thiocyanate &gt; bromide &gt; nitrate &gt; iodide ion selectivity. In Homo sapiens (Human), this protein is Chloride channel protein 2.